A 226-amino-acid chain; its full sequence is Lipoprotein-releasing system ATP-binding protein LolD 1 (226 aa).

An ABC transporter domain is found at 5-225 (LKLDGIRKSY…IVRVVDGKIA (221 aa)). 42–49 (GPSGSGKS) contributes to the ATP binding site.

This sequence belongs to the ABC transporter superfamily. Lipoprotein translocase (TC 3.A.1.125) family. The complex is composed of two ATP-binding proteins (LolD) and two transmembrane proteins (LolC and LolE).

Its subcellular location is the cell inner membrane. In terms of biological role, part of the ABC transporter complex LolCDE involved in the translocation of mature outer membrane-directed lipoproteins, from the inner membrane to the periplasmic chaperone, LolA. Responsible for the formation of the LolA-lipoprotein complex in an ATP-dependent manner. The chain is Lipoprotein-releasing system ATP-binding protein LolD 1 from Rhodopseudomonas palustris (strain ATCC BAA-98 / CGA009).